The sequence spans 76 residues: U-scoloptoxin(13)-Sm1a (76 aa).

A signal peptide spans M1–A22.

This sequence belongs to the scoloptoxin-13 family. In terms of processing, contains 4 disulfide bonds. Expressed by the venom gland.

It is found in the secreted. This Scolopendra morsitans (Tanzanian blue ringleg centipede) protein is U-scoloptoxin(13)-Sm1a.